A 445-amino-acid chain; its full sequence is Ubiquitin carboxyl-terminal hydrolase 11 (445 aa).

The region spanning 1–412 (NSARADLCVA…AAYVLFYQRQ (412 aa)) is the USP domain. A disordered region spans residues 127–194 (RPSSDDEDDG…GPSHWPQRAR (68 aa)). The residue at position 130 (Ser130) is a Phosphoserine. Over residues 131 to 140 (DDEDDGDEKD) the composition is skewed to acidic residues. The Nucleophile role is filled by His362. His370 (proton acceptor) is an active-site residue. The segment at 416 to 445 (RRLQPQPSSSDPPASPACGSPPNSEFMDVN) is disordered. Over residues 420–439 (PQPSSSDPPASPACGSPPNS) the composition is skewed to low complexity. At Ser430 the chain carries Phosphoserine.

Belongs to the peptidase C19 family. In terms of assembly, monomer. Interacts with RANBP9/RANBPM. Interacts with BRCA2. Interacts with CHUK/IKKA. Interacts with NFKBIA. Associated component of the Polycomb group (PcG) multiprotein PRC1-like complex.

Its subcellular location is the nucleus. It localises to the cytoplasm. The protein localises to the chromosome. The catalysed reaction is Thiol-dependent hydrolysis of ester, thioester, amide, peptide and isopeptide bonds formed by the C-terminal Gly of ubiquitin (a 76-residue protein attached to proteins as an intracellular targeting signal).. Its function is as follows. Protease that can remove conjugated ubiquitin from target proteins and polyubiquitin chains. Inhibits the degradation of target proteins by the proteasome. Cleaves preferentially 'Lys-6' and 'Lys-63'-linked ubiquitin chains. Has lower activity with 'Lys-11' and 'Lys-33'-linked ubiquitin chains, and extremely low activity with 'Lys-27', 'Lys-29' and 'Lys-48'-linked ubiquitin chains (in vitro). Plays a role in the regulation of pathways leading to NF-kappa-B activation. Plays a role in the regulation of DNA repair after double-stranded DNA breaks. Acts as a chromatin regulator via its association with the Polycomb group (PcG) multiprotein PRC1-like complex; may act by deubiquitinating components of the PRC1-like complex. Promotes cell proliferation by deubiquitinating phosphorylated E2F1. In Canis lupus familiaris (Dog), this protein is Ubiquitin carboxyl-terminal hydrolase 11 (USP11).